A 352-amino-acid chain; its full sequence is Histidinol-phosphate aminotransferase (352 aa).

Lys-221 is modified (N6-(pyridoxal phosphate)lysine).

It belongs to the class-II pyridoxal-phosphate-dependent aminotransferase family. Histidinol-phosphate aminotransferase subfamily. In terms of assembly, homodimer. Requires pyridoxal 5'-phosphate as cofactor.

The catalysed reaction is L-histidinol phosphate + 2-oxoglutarate = 3-(imidazol-4-yl)-2-oxopropyl phosphate + L-glutamate. The protein operates within amino-acid biosynthesis; L-histidine biosynthesis; L-histidine from 5-phospho-alpha-D-ribose 1-diphosphate: step 7/9. This chain is Histidinol-phosphate aminotransferase, found in Staphylococcus aureus (strain Mu3 / ATCC 700698).